A 763-amino-acid polypeptide reads, in one-letter code: Endoplasmic reticulum membrane sensor NFE2L1 (763 aa).

The helical; Signal-anchor for type II membrane protein transmembrane segment at 7-24 threads the bilayer; sequence YLTEGLLQFTILLSLIGV. The disordered stretch occupies residues 108-150; that stretch reads DPEGSVSGSQPSSGLALESSSGLQDVTGPDNGVRESETEQGFS. A compositionally biased stretch (low complexity) spans 116–131; the sequence is SQPSSGLALESSSGLQ. The interval 180–188 is cholesterol recognition/amino acid consensus (CRAC) region; sequence IFDYSHRQK. 2 N-linked (GlcNAc...) asparagine glycosylation sites follow: Asn338 and Asn350. The interval 369–373 is CPD; it reads SPEVE. A glycan (N-linked (GlcNAc...) asparagine) is linked at Asn413. Disordered stretches follow at residues 460-523 and 585-604; these read EEEF…DSET and TLKKGSKEKQADFLDKQMSR. A Destruction motif motif is present at residues 466-470; that stretch reads DSGLS. The segment covering 466 to 514 has biased composition (low complexity); it reads DSGLSLDSSHSPSSLSSSEGSSSSSSSSSSSSSSSASSSASSSFSEEGA. Phosphoserine; by CK2 is present on Ser519. Residues 589–604 are compositionally biased toward basic and acidic residues; sequence GSKEKQADFLDKQMSR. At Ser590 the chain carries Phosphoserine; by PKA. Residues 645–708 enclose the bZIP domain; the sequence is LIRDIRRRGK…RQMKQKVQSL (64 aa). The segment at 647–666 is basic motif; it reads RDIRRRGKNKMAAQNCRKRK. Residues 673 to 687 form a leucine-zipper region; sequence LERDVEDLQRDKARL. The Nuclear localization signal motif lies at 752–759; it reads RRQERKPK.

Belongs to the bZIP family. CNC subfamily. In terms of assembly, interacts with KEAP1. As to quaternary structure, interacts (via CPD region) with FBXW7; leading to its ubiquitination and degradation. Interacts with SYVN1/HRD1; leading to its ubiquitination and degradation. Interacts (when ubiquitinated) with DDI2; leading to its cleavage. Interacts (via the bZIP domain) with small MAF protein (MAFF, MAFG or MAFK); required for binding to antioxidant response elements (AREs) on DNA. Interacts (via Destruction motif) with BTRC; leading to its ubiquitination and degradation. Interacts with CEBPB; the heterodimer represses expression of DSPP during odontoblast differentiation. Interacts with MOTS-c, a peptide produced by the mitochondrially encoded 12S rRNA MT-RNR1. Post-translationally, cleaved at Leu-104 by the aspartyl protease DDI2 following retrotranslocation, releasing the protein from the endoplasmic reticulum membrane and forming the transcription factor NRF1 that translocates into the nucleus. Ubiquitination is prerequisite for cleavage by aspartyl protease DDI2. N-glycosylated in normal conditions, when it has a single-pass type II membrane protein topology, with the DNA-binding domain facing the endoplasmic reticulum lumen. Deglycosylated during retrotranslocation to the cytosolic side of the membrane, to have a single-pass type III membrane protein topology with the major part of the protein facing the cytosol. In terms of processing, ubiquitinated by the SCF(FBXW7) complex and SYVN1/HRD1, leading to its degradation by the proteasome. Ubiquitinated during retrotranslocation to the cytosolic side of the membrane: ubiquitination does not lead to degradation and is required for processing by the aspartyl protease DDI2 and subsequent release from the endoplasmic reticulum membrane. Post-translationally, phosphorylation by CK2 at Ser-519 inhibits transcription factor activity, possibly by affecting DNA-binding activity. Phosphorylation at Ser-590 is required for interaction with CEBPB. Ubiquitinated by the SCF(BTRC) complex in the nucleus, leading to its degradation by the proteasome.

The protein resides in the endoplasmic reticulum membrane. It localises to the nucleus. Functionally, endoplasmic reticulum membrane sensor that translocates into the nucleus in response to various stresses to act as a transcription factor. Constitutes a precursor of the transcription factor NRF1. Able to detect various cellular stresses, such as cholesterol excess, oxidative stress or proteasome inhibition. In response to stress, it is released from the endoplasmic reticulum membrane following cleavage by the protease DDI2 and translocates into the nucleus to form the transcription factor NRF1. Acts as a key sensor of cholesterol excess: in excess cholesterol conditions, the endoplasmic reticulum membrane form of the protein directly binds cholesterol via its CRAC motif, preventing cleavage and release of the transcription factor NRF1, thereby allowing expression of genes promoting cholesterol removal, such as CD36. Involved in proteasome homeostasis: in response to proteasome inhibition, it is released from the endoplasmic reticulum membrane, translocates to the nucleus and activates expression of genes encoding proteasome subunits. In terms of biological role, CNC-type bZIP family transcription factor that translocates to the nucleus and regulates expression of target genes in response to various stresses. Heterodimerizes with small-Maf proteins (MAFF, MAFG or MAFK) and binds DNA motifs including the antioxidant response elements (AREs), which regulate expression of genes involved in oxidative stress response. Activates or represses expression of target genes, depending on the context. Plays a key role in cholesterol homeostasis by acting as a sensor of cholesterol excess: in low cholesterol conditions, translocates into the nucleus and represses expression of genes involved in defense against cholesterol excess, such as CD36. In excess cholesterol conditions, the endoplasmic reticulum membrane form of the protein directly binds cholesterol via its CRAC motif, preventing cleavage and release of the transcription factor NRF1, thereby allowing expression of genes promoting cholesterol removal. Critical for redox balance in response to oxidative stress: acts by binding the AREs motifs on promoters and mediating activation of oxidative stress response genes, such as GCLC, GCLM, GSS, MT1 and MT2. Plays an essential role during fetal liver hematopoiesis: probably has a protective function against oxidative stress and is involved in lipid homeostasis in the liver. Involved in proteasome homeostasis: in response to proteasome inhibition, mediates the 'bounce-back' of proteasome subunits by translocating into the nucleus and activating expression of genes encoding proteasome subunits. Also involved in regulating glucose flux. Together with CEBPB; represses expression of DSPP during odontoblast differentiation. In response to ascorbic acid induction, activates expression of SP7/Osterix in osteoblasts. The protein is Endoplasmic reticulum membrane sensor NFE2L1 of Bos taurus (Bovine).